The chain runs to 116 residues: Ly-6/neurotoxin-like protein 1 (116 aa).

Positions 1–20 are cleaved as a signal peptide; it reads MTPLLTLFLVALIGLPLAQA. Positions 21-105 constitute a UPAR/Ly6 domain; the sequence is LDCHVCAYNG…FAAPATLALA (85 aa). 5 disulfides stabilise this stretch: cysteine 23–cysteine 46, cysteine 26–cysteine 33, cysteine 39–cysteine 64, cysteine 68–cysteine 85, and cysteine 86–cysteine 91. Asparagine 92 carries the GPI-anchor amidated asparagine lipid modification. The propeptide at 93–116 is removed in mature form; the sequence is GAGFAAPATLALAPILLATLWGLL.

As to quaternary structure, interacts with nAChRs containing alpha-4:beta-2 (CHRNA4:CHRNB2) and alpha-7 (CHRNA7) subunits. Interacts with CHRNA4 probably in the endoplasmic reticulum prior to nAChR pentameric assembly. Interacts with KCNA2/Potassium voltage-gated channel subfamily A member 2.

Its subcellular location is the cell membrane. It is found in the cell projection. The protein localises to the dendrite. The protein resides in the endoplasmic reticulum. In terms of biological role, acts in different tissues through interaction to nicotinic acetylcholine receptors (nAChRs). The proposed role as modulator of nAChR activity seems to be dependent on the nAChR subtype and stoichiometry, and to involve an effect on nAChR trafficking and its cell surface expression, and on single channel properties of the nAChR inserted in the plasma membrane. Modulates functional properties of nicotinic acetylcholine receptors (nAChRs) to prevent excessive excitation, and hence neurodegeneration. Enhances desensitization by increasing both the rate and extent of desensitization of alpha-4:beta-2-containing nAChRs and slowing recovery from desensitization. Promotes large amplitude ACh-evoked currents through alpha-4:beta-2 nAChRs. Is involved in regulation of the nAChR pentameric assembly in the endoplasmic reticulum. Shifts stoichiometry from high sensitivity alpha-4(2):beta-2(3) to low sensitivity alpha-4(3):beta-2(2) nAChR. In vitro modulates alpha-3:beta-4-containing nAChRs. Reduces cell surface expression of (alpha-3:beta-4)(2):beta-4 and (alpha-3:beta-4)(2):alpha-5 nAChRs suggesting an interaction with nAChR alpha-3(-):(+)beta-4 subunit interfaces and an allosteric mode. Corresponding single channel effects characterized by decreased unitary conductance, altered burst proportions and enhanced desensitization/inactivation seem to depend on nAChR alpha:alpha subunit interfaces and are greater in (alpha-3:beta-2)(2):alpha-3 when compared to (alpha-3:beta-2)(2):alpha-5 nAChRs. Prevents plasticity in the primary visual cortex late in life. This Saimiri boliviensis boliviensis (Bolivian squirrel monkey) protein is Ly-6/neurotoxin-like protein 1.